We begin with the raw amino-acid sequence, 137 residues long: MGDIWTWLISFFFLIALVGIIVYQLVCLADLEFDYINPYDSASRINSVVLPEFIVQGVLCVFYLLTGHWFMTLLCLPYLYYNFHLYSKRQHLVDVTEIFNLLNWEKKKRLFKLAYIVLNLFLTIFWMIYSALDDYED.

3 helical membrane-spanning segments follow: residues 8–28 (LISF…LVCL), 53–73 (FIVQ…FMTL), and 113–133 (LAYI…SALD).

It belongs to the cornichon family.

It localises to the membrane. The protein is Protein cornichon homolog 4 of Arabidopsis thaliana (Mouse-ear cress).